Here is a 307-residue protein sequence, read N- to C-terminus: Transcription factor DIVARICATA (307 aa).

Residues R21 to D74 form the SANT domain. The tract at residues Q109 to P133 is disordered. Basic and acidic residues predominate over residues S124–P133. Positions Q126–L182 constitute an HTH myb-type domain. The segment at residues W154–F178 is a DNA-binding region (H-T-H motif). 2 stretches are compositionally biased toward polar residues: residues I196–T206 and M222–S231. The disordered stretch occupies residues I196–S231.

It localises to the nucleus. Involved in the dorsovental asymmetry of flowers. Promotes ventral identity. This Antirrhinum majus (Garden snapdragon) protein is Transcription factor DIVARICATA (DIVARICATA).